A 351-amino-acid polypeptide reads, in one-letter code: Maleylacetate reductase (351 aa).

The protein belongs to the iron-containing alcohol dehydrogenase family. As to quaternary structure, homodimer.

The enzyme catalyses 3-oxoadipate + NAD(+) = maleylacetate + NADH + H(+). Its pathway is aromatic compound metabolism. Involved in the gamma-resorcylate (2,6-dihydroxybenzoate) catabolism. Catalyzes the reduction of maleylacetate to 3-oxoadipate. The polypeptide is Maleylacetate reductase (Rhizobium sp. (strain MTP-10005)).